Reading from the N-terminus, the 123-residue chain is MPPKKDTKGDSKKGQKAKAGSGGGKAKKKKWSKGKVRDKLNNLVLFDKATYDKLYKEVPSYKLITPSVVSERLKIRGSLARAALKELHSKGMIKLVSKHSAQVIYTRATKDTDSKIVLRRGHQ.

A compositionally biased stretch (basic and acidic residues) spans 1 to 13 (MPPKKDTKGDSKK). A disordered region spans residues 1–34 (MPPKKDTKGDSKKGQKAKAGSGGGKAKKKKWSKG). The segment covering 25-34 (KAKKKKWSKG) has biased composition (basic residues).

It belongs to the eukaryotic ribosomal protein eS25 family.

The sequence is that of Small ribosomal subunit protein eS25 (RPS25) from Branchiostoma belcheri (Amphioxus).